The primary structure comprises 219 residues: MYSLLFIILMCIPFSFQTVYDDKSVCDSDNKEYMGIEVYVEATLDEPLRQTTCESEIHKYGASVSNGGLNISVDLLNCFLNFHTVGVYTNRDTVYAKFASLDPWTTEPINSMTHDDLVKLTEECIVDIYLKCEVDKTKDFMKTNGNRLKPRDFKTVPPSDVGSMIELQSDYCVNDVTAYVKIYDECGNIKQHSIPTLRDYFTTKNGQPRKILKKKFDNC.

The signal sequence occupies residues 1 to 16 (MYSLLFIILMCIPFSF). Asn-70 carries an N-linked (GlcNAc...) asparagine; by host glycan.

It belongs to the orthopoxvirus OPG170 family.

It is found in the secreted. Functionally, may interact with several cellular chemokines to interfere with chemokine-glycosaminoglycan (GAG) interactions at the cell surface to alter chemotaxis of nearby responsive cells. In Vaccinia virus (strain Copenhagen) (VACV), this protein is Protein OPG170 (OPG170).